A 92-amino-acid chain; its full sequence is Small ribosomal subunit protein uS19 (92 aa).

This sequence belongs to the universal ribosomal protein uS19 family.

In terms of biological role, protein S19 forms a complex with S13 that binds strongly to the 16S ribosomal RNA. This is Small ribosomal subunit protein uS19 from Baumannia cicadellinicola subsp. Homalodisca coagulata.